Here is a 431-residue protein sequence, read N- to C-terminus: MRGLEKQGSCATAAPCGCVQPALEAGNLLTEPIGYLESCFPAKIGTPRQPSICSHSRACLKIRKNIFNNPEHSLMGLEEFSHVWILFVFHKNGHLNYKAKVQPPRLNGAKTGVFSTRSPHRPNAIGLTLAKLEKVEGGAVYLSGVDMIDGTPVLDIKPYIADYDSPQNLSVHNDHHKLRAEAQVDGTANSCDQLLLSGRGKVQPRQSTKERPKCLEDRTSGENSQKSRDMSEIQHTLPEDRERALDLALEPSRGESMDMPENQLGPPELKSFLEEGTDRPRKVEGALVLPGSSAETQWDASYRARTADRVPYSVVPSWVTEAPVAPLQVRFTPHAEMDLRKLNSGDASQPSFKYFHSAEEAKRAIEAVLSADPRSVYRRKLCEDRLFFFTVDTAHVTCWFGDGFAEVVRIKLASESVQVADPEESLAALGS.

In terms of domain architecture, TsaA-like spans 30–168 (TEPIGYLESC…YIADYDSPQN (139 aa)). S-adenosyl-L-methionine is bound by residues 47–49 (PRQ), 90–91 (HK), R117, L127, and 148–151 (IDGT). The interval 196–242 (LSGRGKVQPRQSTKERPKCLEDRTSGENSQKSRDMSEIQHTLPEDRE) is disordered. Residues 207-242 (STKERPKCLEDRTSGENSQKSRDMSEIQHTLPEDRE) are compositionally biased toward basic and acidic residues.

Belongs to the tRNA methyltransferase O family.

The catalysed reaction is N(6)-L-threonylcarbamoyladenosine(37) in tRNA + S-adenosyl-L-methionine = N(6)-methyl,N(6)-L-threonylcarbamoyladenosine(37) in tRNA + S-adenosyl-L-homocysteine + H(+). Functionally, S-adenosyl-L-methionine-dependent methyltransferase responsible for the addition of the methyl group in the formation of N6-methyl-N6-threonylcarbamoyladenosine at position 37 (m(6)t(6)A37) of the tRNA anticodon loop of tRNA(Ser)(GCU). The methyl group of m(6)t(6)A37 may improve the efficiency of the tRNA decoding ability. May bind to tRNA. This is tRNA (adenine(37)-N6)-methyltransferase from Mus musculus (Mouse).